Here is a 98-residue protein sequence, read N- to C-terminus: Prostate and testis expressed protein 3 (98 aa).

The first 20 residues, 1-20, serve as a signal peptide directing secretion; that stretch reads MNKHFLLLFSLFYFIVEATS. The UPAR/Ly6 domain maps to 21–97; sequence LKCVTCHLRT…CCNSDFCNFR (77 aa). Disulfide bonds link Cys23-Cys50, Cys26-Cys35, Cys42-Cys68, and Cys72-Cys88.

Belongs to the PATE family.

The protein resides in the secreted. This chain is Prostate and testis expressed protein 3 (Pate3), found in Mus musculus (Mouse).